A 1128-amino-acid chain; its full sequence is Probable serine/threonine-protein kinase DDB_G0283337 (1128 aa).

Residues 1-17 are compositionally biased toward low complexity; that stretch reads MENNNNNNINKTNTPNN. Disordered regions lie at residues 1–21, 60–100, 131–151, 236–256, and 375–504; these read MENN…SFSP, INHN…NNNN, RESN…NNSN, NNSK…SNSN, and NDNE…NSEQ. 2 stretches are compositionally biased toward low complexity: residues 243-256 and 375-502; these read NSSN…SNSN and NDNE…NNNS. The Protein kinase domain occupies 777-1054; sequence LSDFSIIGEG…EIQKCKEEYE (278 aa). Residues 783–791 and K809 contribute to the ATP site; that span reads IGEGGFSTV. Catalysis depends on D904, which acts as the Proton acceptor.

The protein belongs to the protein kinase superfamily. Ser/Thr protein kinase family.

The catalysed reaction is L-seryl-[protein] + ATP = O-phospho-L-seryl-[protein] + ADP + H(+). It catalyses the reaction L-threonyl-[protein] + ATP = O-phospho-L-threonyl-[protein] + ADP + H(+). The chain is Probable serine/threonine-protein kinase DDB_G0283337 from Dictyostelium discoideum (Social amoeba).